Consider the following 1888-residue polypeptide: E3 ubiquitin-protein ligase UPL3 (1888 aa).

Over residues Met1 to Glu10 the composition is skewed to basic and acidic residues. Residues Met1–Ser157 are disordered. Over residues Leu41–Ser81 the composition is skewed to low complexity. Positions Asn97–Leu124 are enriched in basic and acidic residues. The segment covering Asp137–Asp146 has biased composition (acidic residues). 4 ARM repeats span residues Glu227–Asp267, Pro270–Gln310, His312–Lys349, and Leu351–Glu390. Disordered stretches follow at residues Lys660–Asn711, Ala970–Cys1119, Asp1134–Ala1157, and Arg1280–Gln1307. Over residues Pro986–Thr1002 the composition is skewed to low complexity. Residues Thr1019 to Gly1029 show a composition bias toward basic and acidic residues. A compositionally biased stretch (acidic residues) spans Ser1076–Asp1113. 2 stretches are compositionally biased toward low complexity: residues Ala1148–Ala1157 and Ala1286–Ser1303. The segment at Ala1377 to Gly1451 is K-box. The HECT domain occupies Met1490–Ser1888. Cys1855 serves as the catalytic Glycyl thioester intermediate.

This sequence belongs to the UPL family. K-HECT subfamily. In terms of tissue distribution, widely expressed.

It catalyses the reaction S-ubiquitinyl-[E2 ubiquitin-conjugating enzyme]-L-cysteine + [acceptor protein]-L-lysine = [E2 ubiquitin-conjugating enzyme]-L-cysteine + N(6)-ubiquitinyl-[acceptor protein]-L-lysine.. Its pathway is protein modification; protein ubiquitination. Its function is as follows. Probable E3 ubiquitin-protein ligase which mediates ubiquitination and subsequent proteasomal degradation of target proteins. Involved in the repression of endoreduplication process and the cell morphogenesis in the trichomes. This chain is E3 ubiquitin-protein ligase UPL3 (UPL3), found in Arabidopsis thaliana (Mouse-ear cress).